The chain runs to 718 residues: Phenylalanine--tRNA ligase beta subunit (718 aa).

The region spanning 39-153 is the tRNA-binding domain; sequence LNEISGIKFG…IFDLESNPLK (115 aa). In terms of domain architecture, B5 spans 386–460; that stretch reads SKKTFLDLNY…RFYGLEKLKD (75 aa). Residues Asp-438, Asp-444, and Asp-448 each coordinate Mg(2+).

The protein belongs to the phenylalanyl-tRNA synthetase beta subunit family. Type 1 subfamily. Tetramer of two alpha and two beta subunits. Requires Mg(2+) as cofactor.

It is found in the cytoplasm. It catalyses the reaction tRNA(Phe) + L-phenylalanine + ATP = L-phenylalanyl-tRNA(Phe) + AMP + diphosphate + H(+). This is Phenylalanine--tRNA ligase beta subunit from Mesomycoplasma hyopneumoniae (strain 7448) (Mycoplasma hyopneumoniae).